Here is a 205-residue protein sequence, read N- to C-terminus: Nucleoside triphosphate pyrophosphatase (205 aa).

Asp-76 functions as the Proton acceptor in the catalytic mechanism.

The protein belongs to the Maf family. The cofactor is a divalent metal cation.

Its subcellular location is the cytoplasm. It carries out the reaction a ribonucleoside 5'-triphosphate + H2O = a ribonucleoside 5'-phosphate + diphosphate + H(+). The enzyme catalyses a 2'-deoxyribonucleoside 5'-triphosphate + H2O = a 2'-deoxyribonucleoside 5'-phosphate + diphosphate + H(+). Its function is as follows. Nucleoside triphosphate pyrophosphatase. May have a dual role in cell division arrest and in preventing the incorporation of modified nucleotides into cellular nucleic acids. This is Nucleoside triphosphate pyrophosphatase from Orientia tsutsugamushi (strain Boryong) (Rickettsia tsutsugamushi).